The primary structure comprises 107 residues: Phosphoribosyl-ATP pyrophosphatase (107 aa).

This sequence belongs to the PRA-PH family.

It is found in the cytoplasm. It carries out the reaction 1-(5-phospho-beta-D-ribosyl)-ATP + H2O = 1-(5-phospho-beta-D-ribosyl)-5'-AMP + diphosphate + H(+). Its pathway is amino-acid biosynthesis; L-histidine biosynthesis; L-histidine from 5-phospho-alpha-D-ribose 1-diphosphate: step 2/9. In Zymomonas mobilis subsp. mobilis (strain ATCC 31821 / ZM4 / CP4), this protein is Phosphoribosyl-ATP pyrophosphatase.